Reading from the N-terminus, the 32-residue chain is MASEIFGTAAVFWVLIPVGLLGGAILLKLQGD.

Residues 9–27 (AAVFWVLIPVGLLGGAILL) traverse the membrane as a helical segment.

This sequence belongs to the PetM family. In terms of assembly, the 4 large subunits of the cytochrome b6-f complex are cytochrome b6, subunit IV (17 kDa polypeptide, PetD), cytochrome f and the Rieske protein, while the 4 small subunits are PetG, PetL, PetM and PetN. The complex functions as a dimer.

Its subcellular location is the cellular thylakoid membrane. In terms of biological role, component of the cytochrome b6-f complex, which mediates electron transfer between photosystem II (PSII) and photosystem I (PSI), cyclic electron flow around PSI, and state transitions. This is Cytochrome b6-f complex subunit 7 from Prochlorococcus marinus (strain MIT 9211).